The chain runs to 363 residues: 3-dehydroquinate synthase (363 aa).

NAD(+)-binding positions include 134–135 (TT), Lys-147, Lys-156, and 174–177 (TLKT). Zn(2+) contacts are provided by Glu-189, His-254, and His-271.

The protein belongs to the sugar phosphate cyclases superfamily. Dehydroquinate synthase family. The cofactor is Co(2+). Zn(2+) serves as cofactor. It depends on NAD(+) as a cofactor.

It is found in the cytoplasm. The catalysed reaction is 7-phospho-2-dehydro-3-deoxy-D-arabino-heptonate = 3-dehydroquinate + phosphate. It functions in the pathway metabolic intermediate biosynthesis; chorismate biosynthesis; chorismate from D-erythrose 4-phosphate and phosphoenolpyruvate: step 2/7. Catalyzes the conversion of 3-deoxy-D-arabino-heptulosonate 7-phosphate (DAHP) to dehydroquinate (DHQ). The polypeptide is 3-dehydroquinate synthase (Prochlorococcus marinus (strain MIT 9515)).